Here is a 69-residue protein sequence, read N- to C-terminus: Small, acid-soluble spore protein C4 (69 aa).

This sequence belongs to the alpha/beta-type SASP family.

Its function is as follows. SASP are bound to spore DNA. They are double-stranded DNA-binding proteins that cause DNA to change to an a-like conformation. They protect the DNA backbone from chemical and enzymatic cleavage and are thus involved in dormant spore's high resistance to UV light. This Priestia megaterium (Bacillus megaterium) protein is Small, acid-soluble spore protein C4 (SASP-C4).